The chain runs to 367 residues: Glutamate 5-kinase 2 (367 aa).

Lysine 10 is a binding site for ATP. Residues serine 50, aspartate 136, and asparagine 148 each coordinate substrate. ATP is bound by residues 168 to 169 (TD) and 210 to 216 (TGGMATK). The PUA domain occupies 275-353 (SGQIVIDAGA…KQIGELLDYD (79 aa)).

Belongs to the glutamate 5-kinase family.

It is found in the cytoplasm. It carries out the reaction L-glutamate + ATP = L-glutamyl 5-phosphate + ADP. It participates in amino-acid biosynthesis; L-proline biosynthesis; L-glutamate 5-semialdehyde from L-glutamate: step 1/2. In terms of biological role, catalyzes the transfer of a phosphate group to glutamate to form L-glutamate 5-phosphate. The sequence is that of Glutamate 5-kinase 2 from Pseudoalteromonas translucida (strain TAC 125).